A 337-amino-acid polypeptide reads, in one-letter code: Adenine deaminase (337 aa).

Residues histidine 17, histidine 19, and histidine 197 each coordinate Zn(2+). Glutamate 200 functions as the Proton donor in the catalytic mechanism. Aspartate 278 serves as a coordination point for Zn(2+). Aspartate 279 is a substrate binding site.

Belongs to the metallo-dependent hydrolases superfamily. Adenosine and AMP deaminases family. Adenine deaminase type 2 subfamily. The cofactor is Zn(2+).

It catalyses the reaction adenine + H2O + H(+) = hypoxanthine + NH4(+). In terms of biological role, catalyzes the hydrolytic deamination of adenine to hypoxanthine. Plays an important role in the purine salvage pathway and in nitrogen catabolism. This chain is Adenine deaminase, found in Zymomonas mobilis subsp. mobilis (strain ATCC 31821 / ZM4 / CP4).